The chain runs to 263 residues: N-acyl homoserine lactonase AttM (263 aa).

Zn(2+) is bound by residues His103, His105, Asp107, His108, His180, Asp202, and His247.

The protein belongs to the metallo-beta-lactamase superfamily. Zn(2+) serves as cofactor.

It catalyses the reaction an N-acyl-L-homoserine lactone + H2O = an N-acyl-L-homoserine + H(+). This Azorhizobium caulinodans (strain ATCC 43989 / DSM 5975 / JCM 20966 / LMG 6465 / NBRC 14845 / NCIMB 13405 / ORS 571) protein is N-acyl homoserine lactonase AttM.